A 584-amino-acid polypeptide reads, in one-letter code: Phenylalanine--tRNA ligase beta subunit (584 aa).

The B5 domain maps to 290–369 (FSVRTKTVTH…RALGFNSLEP (80 aa)). Mg(2+) is bound by residues Asp347, Asp353, Asp356, and Asp357.

It belongs to the phenylalanyl-tRNA synthetase beta subunit family. Type 2 subfamily. In terms of assembly, tetramer of two alpha and two beta subunits. Mg(2+) serves as cofactor.

Its subcellular location is the cytoplasm. The enzyme catalyses tRNA(Phe) + L-phenylalanine + ATP = L-phenylalanyl-tRNA(Phe) + AMP + diphosphate + H(+). The chain is Phenylalanine--tRNA ligase beta subunit from Haloarcula marismortui (strain ATCC 43049 / DSM 3752 / JCM 8966 / VKM B-1809) (Halobacterium marismortui).